Consider the following 505-residue polypeptide: Calcium/calmodulin-dependent protein kinase kinase 1 (505 aa).

The tract at residues 26 to 61 (THLEEADGGPEPTRNGVDPPPRARAASVIPGSTSRL) is disordered. Phosphoserine is present on residues serine 67 and serine 74. The residue at position 78 (arginine 78) is an Asymmetric dimethylarginine. Serine 100 is modified (phosphoserine). Position 108 is a phosphothreonine (threonine 108). The 282-residue stretch at 128–409 (YKLQSEIGKG…VPDIKLHPWV (282 aa)) folds into the Protein kinase domain. ATP-binding positions include 134–142 (IGKGAYGVV) and lysine 157. An RP domain region spans residues 167 to 189 (QYGFPRRPPPRGSQAAQGGPAKQ). The active-site Proton acceptor is aspartate 275. The tract at residues 435 to 440 (KNSVRL) is autoinhibitory domain. The interval 438–463 (VRLIPSWTTVILVKSMLRKRSFGNPF) is calmodulin-binding. Phosphoserine occurs at positions 458, 475, and 492. The disordered stretch occupies residues 460-505 (GNPFEPQARREERSMSAPGNLLVKEGFGEGGKSPELPGVQEDEAAS).

This sequence belongs to the protein kinase superfamily. Ser/Thr protein kinase family. Interacts with CAMK4 and calmodulin. Post-translationally, appears to be autophosphorylated in a Ca(2+)/calmodulin-dependent manner. Phosphorylated at multiple sites by PRCAKA/PKA. Phosphorylation of Ser-458 is blocked upon binding to Ca(2+)/calmodulin. In vitro, phosphorylated by CAMK1 and CAMK4.

Its subcellular location is the cytoplasm. The protein resides in the nucleus. The enzyme catalyses L-seryl-[protein] + ATP = O-phospho-L-seryl-[protein] + ADP + H(+). It carries out the reaction L-threonyl-[protein] + ATP = O-phospho-L-threonyl-[protein] + ADP + H(+). Activated by Ca(2+)/calmodulin. Binding of calmodulin may relieve intrasteric autoinhibition. Partially inhibited upon phosphorylation by PRCAKA/PKA. May be regulated through phosphorylation by CAMK1 and CAMK4. Calcium/calmodulin-dependent protein kinase that belongs to a proposed calcium-triggered signaling cascade involved in a number of cellular processes. Phosphorylates CAMK1, CAMK1D, CAMK1G and CAMK4. Involved in regulating cell apoptosis. Promotes cell survival by phosphorylating AKT1/PKB that inhibits pro-apoptotic BAD/Bcl2-antagonist of cell death. This is Calcium/calmodulin-dependent protein kinase kinase 1 (CAMKK1) from Homo sapiens (Human).